A 281-amino-acid chain; its full sequence is Undecaprenyl-diphosphatase (281 aa).

8 helical membrane-spanning segments follow: residues M1–I21, W45–A65, S93–F113, L125–V145, I155–A175, A195–F215, F227–F247, and S256–F276.

The protein belongs to the UppP family.

It localises to the cell inner membrane. It catalyses the reaction di-trans,octa-cis-undecaprenyl diphosphate + H2O = di-trans,octa-cis-undecaprenyl phosphate + phosphate + H(+). In terms of biological role, catalyzes the dephosphorylation of undecaprenyl diphosphate (UPP). Confers resistance to bacitracin. The protein is Undecaprenyl-diphosphatase of Syntrophobacter fumaroxidans (strain DSM 10017 / MPOB).